A 316-amino-acid polypeptide reads, in one-letter code: Glycerol-3-phosphate dehydrogenase [NAD(P)+] (316 aa).

NADPH contacts are provided by serine 14, phenylalanine 15, arginine 35, and lysine 109. Sn-glycerol 3-phosphate is bound by residues lysine 109 and glycine 137. Alanine 141 provides a ligand contact to NADPH. Sn-glycerol 3-phosphate contacts are provided by lysine 192, aspartate 248, serine 258, arginine 259, and asparagine 260. The active-site Proton acceptor is lysine 192. Arginine 259 contacts NADPH. NADPH contacts are provided by leucine 283 and glutamate 285.

Belongs to the NAD-dependent glycerol-3-phosphate dehydrogenase family.

It localises to the cytoplasm. The catalysed reaction is sn-glycerol 3-phosphate + NAD(+) = dihydroxyacetone phosphate + NADH + H(+). The enzyme catalyses sn-glycerol 3-phosphate + NADP(+) = dihydroxyacetone phosphate + NADPH + H(+). It functions in the pathway membrane lipid metabolism; glycerophospholipid metabolism. In terms of biological role, catalyzes the reduction of the glycolytic intermediate dihydroxyacetone phosphate (DHAP) to sn-glycerol 3-phosphate (G3P), the key precursor for phospholipid synthesis. This Rickettsia prowazekii (strain Madrid E) protein is Glycerol-3-phosphate dehydrogenase [NAD(P)+].